Consider the following 503-residue polypeptide: tRNA-2-methylthio-N(6)-dimethylallyladenosine synthase (503 aa).

The 117-residue stretch at 5–121 (RSYEIRTFGC…LPVLLERARH (117 aa)) folds into the MTTase N-terminal domain. Residues Cys-14, Cys-50, Cys-84, Cys-158, Cys-162, and Cys-165 each coordinate [4Fe-4S] cluster. The Radical SAM core domain occupies 144 to 380 (RESAYAGWVS…IALQEEISLA (237 aa)). Residues 383–453 (RELIGTEVEL…PHHLIADAPV (71 aa)) form the TRAM domain.

This sequence belongs to the methylthiotransferase family. MiaB subfamily. As to quaternary structure, monomer. Requires [4Fe-4S] cluster as cofactor.

The protein resides in the cytoplasm. The enzyme catalyses N(6)-dimethylallyladenosine(37) in tRNA + (sulfur carrier)-SH + AH2 + 2 S-adenosyl-L-methionine = 2-methylsulfanyl-N(6)-dimethylallyladenosine(37) in tRNA + (sulfur carrier)-H + 5'-deoxyadenosine + L-methionine + A + S-adenosyl-L-homocysteine + 2 H(+). Catalyzes the methylthiolation of N6-(dimethylallyl)adenosine (i(6)A), leading to the formation of 2-methylthio-N6-(dimethylallyl)adenosine (ms(2)i(6)A) at position 37 in tRNAs that read codons beginning with uridine. The chain is tRNA-2-methylthio-N(6)-dimethylallyladenosine synthase from Nocardia farcinica (strain IFM 10152).